The chain runs to 83 residues: Cobrotoxin (83 aa).

A signal peptide spans methionine 1–threonine 21. Cystine bridges form between cysteine 24–cysteine 45, cysteine 38–cysteine 62, cysteine 64–cysteine 75, and cysteine 76–cysteine 81.

Belongs to the three-finger toxin family. Short-chain subfamily. Type I alpha-neurotoxin sub-subfamily. Expressed by the venom gland.

It is found in the secreted. In terms of biological role, binds to muscle nicotinic acetylcholine receptor (nAChR) and inhibit acetylcholine from binding to the receptor, thereby impairing neuromuscular transmission. Has a higher toxicity than cobrotoxin-b. In vivo, when tested on rat arthritis models, shows anti-inflammation and immunosuppression effects. The protein is Cobrotoxin of Naja atra (Chinese cobra).